An 82-amino-acid chain; its full sequence is Cytochrome c oxidase subunit 8, mitochondrial (82 aa).

The N-terminal 31 residues, 1-31 (MFSRVALRAAPRQQPFSLVARRTFQTTRAQL), are a transit peptide targeting the mitochondrion. At 32–52 (SSPYHYPEGPRSNLPFNPKTR) the chain is on the mitochondrial matrix side. The chain crosses the membrane as a helical span at residues 53-75 (FFWFRYLMYCVVGFGSPVAIAVW). Topologically, residues 76–82 (QTYRPRS) are mitochondrial intermembrane.

The protein belongs to the cytochrome c oxidase VIIc family. As to quaternary structure, component of the cytochrome c oxidase (complex IV, CIV), a multisubunit enzyme composed of 11 subunits. The complex is composed of a catalytic core of 3 subunits Cox1, Cox2 and Cox3, encoded in the mitochondrial DNA, and 8 supernumerary subunits Cox4, Cox5a/Cox5, Cox6, Cox7, Cox8, Cox7a/Cox9, Cox6b/Cox12 and Cox6a/Cox13, which are encoded in the nuclear genome. The complex exists as a monomer or a dimer and forms respiratory supercomplexes (SCs) in the inner mitochondrial membrane with NADH-ubiquinone oxidoreductase (complex I, CI) and ubiquinol-cytochrome c oxidoreductase (cytochrome b-c1 complex, complex III, CIII), resulting in various different assemblies (supercomplexes I(1)IV(1), I(1)III(3)IV(2), III(2)IV(1) and III(2)IV(2) as well as larger supercomplexes of compositions like I(1)III(2)IV(5-6)).

It is found in the mitochondrion inner membrane. Its pathway is energy metabolism; oxidative phosphorylation. In terms of biological role, component of the cytochrome c oxidase, the last enzyme in the mitochondrial electron transport chain which drives oxidative phosphorylation. The respiratory chain contains 3 multisubunit complexes succinate dehydrogenase (complex II, CII), ubiquinol-cytochrome c oxidoreductase (cytochrome b-c1 complex, complex III, CIII) and cytochrome c oxidase (complex IV, CIV), that cooperate to transfer electrons derived from NADH and succinate to molecular oxygen, creating an electrochemical gradient over the inner membrane that drives transmembrane transport and the ATP synthase. Cytochrome c oxidase is the component of the respiratory chain that catalyzes the reduction of oxygen to water. Electrons originating from reduced cytochrome c in the intermembrane space (IMS) are transferred via the dinuclear copper A center (CU(A)) of Cox2 and heme A of Cox1 to the active site in Cox1, a binuclear center (BNC) formed by heme A3 and copper B (CU(B)). The BNC reduces molecular oxygen to 2 water molecules using 4 electrons from cytochrome c in the IMS and 4 protons from the mitochondrial matrix. The chain is Cytochrome c oxidase subunit 8, mitochondrial (cox-15) from Neurospora crassa (strain ATCC 24698 / 74-OR23-1A / CBS 708.71 / DSM 1257 / FGSC 987).